Consider the following 252-residue polypeptide: Probable transcriptional regulatory protein A1E_02520 (252 aa).

This sequence belongs to the TACO1 family.

Its subcellular location is the cytoplasm. In Rickettsia canadensis (strain McKiel), this protein is Probable transcriptional regulatory protein A1E_02520.